The sequence spans 314 residues: 3'-5' exoribonuclease YhaM (314 aa).

Residues 163–279 enclose the HD domain; that stretch reads HVVSMLDLAK…LHYIDNLDAK (117 aa).

It belongs to the YhaM family.

Shows a 3'-5' exoribonuclease activity. The chain is 3'-5' exoribonuclease YhaM from Bacillus cereus (strain AH187).